We begin with the raw amino-acid sequence, 436 residues long: Mitochondrial distribution and morphology protein 12 (436 aa).

The region spanning 1-436 is the SMP-LTD domain; the sequence is MSIEVNWGTA…VFPSFYTFLI (436 aa). The segment covering 73-84 has biased composition (acidic residues); the sequence is DEDGDSGSEISE. Disordered regions lie at residues 73–98, 184–275, and 352–380; these read DEDG…WDRT, AVAG…RMRE, and GSGS…PHQK. Basic and acidic residues predominate over residues 85–98; it reads ELQHRTHDNPWDRT. Composition is skewed to polar residues over residues 190 to 206 and 222 to 243; these read PFTT…QGNK and DSSN…SNRS. Positions 244 to 255 are enriched in basic and acidic residues; it reads SHPDGHPEHNDD. A compositionally biased stretch (polar residues) spans 256–267; sequence PISSSENPLLQN.

It belongs to the MDM12 family. In terms of assembly, component of the ER-mitochondria encounter structure (ERMES) or MDM complex, composed of mmm1, mdm10, mdm12 and mdm34. A mmm1 homodimer associates with one molecule of mdm12 on each side in a pairwise head-to-tail manner, and the SMP-LTD domains of mmm1 and mdm12 generate a continuous hydrophobic tunnel for phospholipid trafficking.

The protein resides in the mitochondrion outer membrane. The protein localises to the endoplasmic reticulum membrane. Component of the ERMES/MDM complex, which serves as a molecular tether to connect the endoplasmic reticulum (ER) and mitochondria. Components of this complex are involved in the control of mitochondrial shape and protein biogenesis, and function in nonvesicular lipid trafficking between the ER and mitochondria. Mdm12 is required for the interaction of the ER-resident membrane protein mmm1 and the outer mitochondrial membrane-resident beta-barrel protein mdm10. The mdm12-mmm1 subcomplex functions in the major beta-barrel assembly pathway that is responsible for biogenesis of all mitochondrial outer membrane beta-barrel proteins, and acts in a late step after the SAM complex. The mdm10-mdm12-mmm1 subcomplex further acts in the TOM40-specific pathway after the action of the mdm12-mmm1 complex. Essential for establishing and maintaining the structure of mitochondria and maintenance of mtDNA nucleoids. The chain is Mitochondrial distribution and morphology protein 12 from Emericella nidulans (strain FGSC A4 / ATCC 38163 / CBS 112.46 / NRRL 194 / M139) (Aspergillus nidulans).